The following is a 757-amino-acid chain: Endonuclease MutS2 (757 aa).

321–328 (GPNMGGKT) contributes to the ATP binding site. The 76-residue stretch at 681–756 (IDIRGMTVEE…GTGVTVVEVK (76 aa)) folds into the Smr domain.

It belongs to the DNA mismatch repair MutS family. MutS2 subfamily. In terms of assembly, homodimer. Binds to stalled ribosomes, contacting rRNA.

In terms of biological role, endonuclease that is involved in the suppression of homologous recombination and thus may have a key role in the control of bacterial genetic diversity. Its function is as follows. Acts as a ribosome collision sensor, splitting the ribosome into its 2 subunits. Detects stalled/collided 70S ribosomes which it binds and splits by an ATP-hydrolysis driven conformational change. Acts upstream of the ribosome quality control system (RQC), a ribosome-associated complex that mediates the extraction of incompletely synthesized nascent chains from stalled ribosomes and their subsequent degradation. Probably generates substrates for RQC. The sequence is that of Endonuclease MutS2 from Thermotoga petrophila (strain ATCC BAA-488 / DSM 13995 / JCM 10881 / RKU-1).